We begin with the raw amino-acid sequence, 187 residues long: dCTP deaminase (187 aa).

DCTP is bound by residues 110–115, 134–136, glutamine 155, tyrosine 169, and glutamine 179; these read KSTYAR and TLE. Glutamate 136 serves as the catalytic Proton donor/acceptor.

Belongs to the dCTP deaminase family. In terms of assembly, homotrimer.

It carries out the reaction dCTP + H2O + H(+) = dUTP + NH4(+). The protein operates within pyrimidine metabolism; dUMP biosynthesis; dUMP from dCTP (dUTP route): step 1/2. Catalyzes the deamination of dCTP to dUTP. The chain is dCTP deaminase from Bordetella petrii (strain ATCC BAA-461 / DSM 12804 / CCUG 43448).